The chain runs to 114 residues: Small ribosomal subunit protein bS6 (114 aa).

It belongs to the bacterial ribosomal protein bS6 family.

Functionally, binds together with bS18 to 16S ribosomal RNA. This Thermosynechococcus vestitus (strain NIES-2133 / IAM M-273 / BP-1) protein is Small ribosomal subunit protein bS6.